Consider the following 523-residue polypeptide: Metalloprotease TIKI2 (523 aa).

An N-terminal signal peptide occupies residues 1-26 (MGKTMWARAVFLCFSVGTLLWQEVLT). The Extracellular segment spans residues 27–499 (RRIPVDTGQC…HSQSNSSPKC (473 aa)). N-linked (GlcNAc...) asparagine glycosylation is found at N225, N234, N283, and N341. Residues 500 to 516 (LSASPAFLYTLVTLCLI) traverse the membrane as a helical segment. The Cytoplasmic segment spans residues 517–523 (TTMRTRS).

The protein belongs to the TIKI family. It depends on Mn(2+) as a cofactor. Co(2+) serves as cofactor.

It localises to the cell membrane. Metalloprotease that acts as a negative regulator of the Wnt signaling pathway by mediating the cleavage of the N-terminal residues of a subset of Wnt proteins. Following cleavage, Wnt proteins become oxidized and form large disulfide-bond oligomers, leading to their inactivation. Able to cleave wnt8. Required for head formation. The chain is Metalloprotease TIKI2 (trabd2b) from Xenopus tropicalis (Western clawed frog).